The sequence spans 118 residues: UPF0102 protein Swit_0572 (118 aa).

Belongs to the UPF0102 family.

The chain is UPF0102 protein Swit_0572 from Rhizorhabdus wittichii (strain DSM 6014 / CCUG 31198 / JCM 15750 / NBRC 105917 / EY 4224 / RW1) (Sphingomonas wittichii).